The primary structure comprises 219 residues: PKHD-type hydroxylase AM1_3707 (219 aa).

Residues 78 to 172 (SIHTLLFSRY…RLVAVGWVQS (95 aa)) form the Fe2OG dioxygenase domain. Fe cation is bound by residues His-96, Asp-98, and His-153. Arg-163 contacts 2-oxoglutarate.

Fe(2+) is required as a cofactor. Requires L-ascorbate as cofactor.

This Acaryochloris marina (strain MBIC 11017) protein is PKHD-type hydroxylase AM1_3707.